A 232-amino-acid chain; its full sequence is RNA chaperone ProQ (232 aa).

Residues 105 to 182 (EAKARVQAQR…REEQHTPVSD (78 aa)) are disordered. Positions 117–136 (QQAKKREAAAAAGEKEDAPR) are enriched in basic and acidic residues. Residues 137–146 (RERKPRPTTP) are compositionally biased toward basic residues. Positions 147 to 177 (RRKEGAERKPRSQKPVEKAPKTVKAPREEQH) are enriched in basic and acidic residues.

The protein belongs to the ProQ family.

The protein resides in the cytoplasm. Its function is as follows. RNA chaperone with significant RNA binding, RNA strand exchange and RNA duplexing activities. May regulate ProP activity through an RNA-based, post-transcriptional mechanism. The protein is RNA chaperone ProQ of Escherichia coli (strain UTI89 / UPEC).